The following is a 446-amino-acid chain: tRNA-2-methylthio-N(6)-dimethylallyladenosine synthase (446 aa).

The MTTase N-terminal domain maps to 2–122 (KKAYVKSYGC…LPDLLRQSRE (121 aa)). Positions 11, 47, 85, 157, 161, and 164 each coordinate [4Fe-4S] cluster. The Radical SAM core domain maps to 143–375 (RNRGVTGFLT…QDLLDRQRHA (233 aa)). One can recognise a TRAM domain in the interval 378–440 (AASVGTLTEI…SNSLFGETLE (63 aa)).

The protein belongs to the methylthiotransferase family. MiaB subfamily. As to quaternary structure, monomer. It depends on [4Fe-4S] cluster as a cofactor.

It localises to the cytoplasm. It catalyses the reaction N(6)-dimethylallyladenosine(37) in tRNA + (sulfur carrier)-SH + AH2 + 2 S-adenosyl-L-methionine = 2-methylsulfanyl-N(6)-dimethylallyladenosine(37) in tRNA + (sulfur carrier)-H + 5'-deoxyadenosine + L-methionine + A + S-adenosyl-L-homocysteine + 2 H(+). Catalyzes the methylthiolation of N6-(dimethylallyl)adenosine (i(6)A), leading to the formation of 2-methylthio-N6-(dimethylallyl)adenosine (ms(2)i(6)A) at position 37 in tRNAs that read codons beginning with uridine. The protein is tRNA-2-methylthio-N(6)-dimethylallyladenosine synthase of Methylorubrum extorquens (strain PA1) (Methylobacterium extorquens).